The chain runs to 362 residues: Methylthioribose-1-phosphate isomerase (362 aa).

The active-site Proton donor is aspartate 252.

The protein belongs to the eIF-2B alpha/beta/delta subunits family. MtnA subfamily.

Its subcellular location is the cytoplasm. It localises to the nucleus. The enzyme catalyses 5-(methylsulfanyl)-alpha-D-ribose 1-phosphate = 5-(methylsulfanyl)-D-ribulose 1-phosphate. The protein operates within amino-acid biosynthesis; L-methionine biosynthesis via salvage pathway; L-methionine from S-methyl-5-thio-alpha-D-ribose 1-phosphate: step 1/6. Its function is as follows. Catalyzes the interconversion of methylthioribose-1-phosphate (MTR-1-P) into methylthioribulose-1-phosphate (MTRu-1-P). The protein is Methylthioribose-1-phosphate isomerase of Drosophila pseudoobscura pseudoobscura (Fruit fly).